Here is a 520-residue protein sequence, read N- to C-terminus: Hydroxymethylglutaryl-CoA synthase, cytoplasmic (520 aa).

The residue at position 4 (Ser-4) is a Phosphoserine. Residues Asp-43 and Ala-44 each coordinate (3S)-3-hydroxy-3-methylglutaryl-CoA. 44–46 (AGK) is a CoA binding site. Lys-46 is subject to N6-acetyllysine. Glu-95 (proton donor/acceptor) is an active-site residue. The (3S)-3-hydroxy-3-methylglutaryl-CoA site is built by Cys-129, Asn-167, Thr-171, Ser-221, and His-264. Cys-129 acts as the Acyl-thioester intermediate in catalysis. Position 167 (Asn-167) interacts with CoA. Ser-221 is a binding site for CoA. His-264 functions as the Proton donor/acceptor in the catalytic mechanism. The CoA site is built by Lys-269 and Lys-273. Residues Lys-273, Asn-343, and Ser-377 each contribute to the (3S)-3-hydroxy-3-methylglutaryl-CoA site. Position 273 is an N6-acetyllysine (Lys-273). Thr-476 is subject to Phosphothreonine. The tract at residues 492–520 (HIPSPAKKVPRLPATAAEPEAAVISNGEH) is disordered. Ser-495 and Ser-516 each carry phosphoserine.

Belongs to the thiolase-like superfamily. HMG-CoA synthase family. As to quaternary structure, homodimer.

The protein resides in the cytoplasm. It carries out the reaction acetoacetyl-CoA + acetyl-CoA + H2O = (3S)-3-hydroxy-3-methylglutaryl-CoA + CoA + H(+). Its pathway is metabolic intermediate biosynthesis; (R)-mevalonate biosynthesis; (R)-mevalonate from acetyl-CoA: step 2/3. Its function is as follows. Catalyzes the condensation of acetyl-CoA with acetoacetyl-CoA to form HMG-CoA, which is converted by HMG-CoA reductase (HMGCR) into mevalonate, a precursor for cholesterol synthesis. This is Hydroxymethylglutaryl-CoA synthase, cytoplasmic from Homo sapiens (Human).